The chain runs to 220 residues: Chloramphenicol acetyltransferase (220 aa).

H195 acts as the Proton acceptor in catalysis.

Belongs to the chloramphenicol acetyltransferase family. In terms of assembly, homotrimer.

The catalysed reaction is chloramphenicol + acetyl-CoA = chloramphenicol 3-acetate + CoA. Its function is as follows. This enzyme is an effector of chloramphenicol resistance in bacteria. This Streptomyces acrimycini protein is Chloramphenicol acetyltransferase (cat).